The chain runs to 856 residues: DNA mismatch repair protein MutS (856 aa).

618-625 (GPNMGGKS) contacts ATP.

This sequence belongs to the DNA mismatch repair MutS family.

This protein is involved in the repair of mismatches in DNA. It is possible that it carries out the mismatch recognition step. This protein has a weak ATPase activity. This is DNA mismatch repair protein MutS from Shewanella putrefaciens (strain CN-32 / ATCC BAA-453).